A 486-amino-acid polypeptide reads, in one-letter code: tRNA sulfurtransferase (486 aa).

The region spanning 61–165 (AILIDVLGRI…NDHMMLIKAR (105 aa)) is the THUMP domain. ATP is bound by residues 183–184 (LI), Lys-265, Gly-287, and Gln-296. An intrachain disulfide couples Cys-344 to Cys-456. In terms of domain architecture, Rhodanese spans 404–481 (LSANDVILDI…NGFANVRVFA (78 aa)). The Cysteine persulfide intermediate role is filled by Cys-456.

Belongs to the ThiI family.

It localises to the cytoplasm. The catalysed reaction is [ThiI sulfur-carrier protein]-S-sulfanyl-L-cysteine + a uridine in tRNA + 2 reduced [2Fe-2S]-[ferredoxin] + ATP + H(+) = [ThiI sulfur-carrier protein]-L-cysteine + a 4-thiouridine in tRNA + 2 oxidized [2Fe-2S]-[ferredoxin] + AMP + diphosphate. The enzyme catalyses [ThiS sulfur-carrier protein]-C-terminal Gly-Gly-AMP + S-sulfanyl-L-cysteinyl-[cysteine desulfurase] + AH2 = [ThiS sulfur-carrier protein]-C-terminal-Gly-aminoethanethioate + L-cysteinyl-[cysteine desulfurase] + A + AMP + 2 H(+). The protein operates within cofactor biosynthesis; thiamine diphosphate biosynthesis. In terms of biological role, catalyzes the ATP-dependent transfer of a sulfur to tRNA to produce 4-thiouridine in position 8 of tRNAs, which functions as a near-UV photosensor. Also catalyzes the transfer of sulfur to the sulfur carrier protein ThiS, forming ThiS-thiocarboxylate. This is a step in the synthesis of thiazole, in the thiamine biosynthesis pathway. The sulfur is donated as persulfide by IscS. The sequence is that of tRNA sulfurtransferase from Mannheimia succiniciproducens (strain KCTC 0769BP / MBEL55E).